The following is a 1174-amino-acid chain: Creatine kinase, flagellar (1174 aa).

Positions 1–14 are enriched in polar residues; the sequence is MGCAASSQQTTATG. A disordered region spans residues 1 to 62; the sequence is MGCAASSQQT…PFVEPDPNYP (62 aa). The segment covering 18-39 has biased composition (low complexity); it reads AAGEKANPAPANNNPNAANKAE. Positions 53-139 constitute a Phosphagen kinase N-terminal 1 domain; the sequence is PFVEPDPNYP…FDPTIDKRHN (87 aa). The 1; approximate repeat unit spans residues 61–414; sequence YPDLSKHNNY…EKALEKGSDI (354 aa). In terms of domain architecture, Phosphagen kinase C-terminal 1 spans 166–408; that stretch reads YVLSCRVRTG…KKLIELEKAL (243 aa). ATP contacts are provided by residues 169 to 173, His232, Arg277, and 333 to 337; these read SCRVR and RAGVH. The 87-residue stretch at 426–512 folds into the Phosphagen kinase N-terminal 2 domain; it reads RAEQVKEGYP…FDPVIDARHG (87 aa). A 2; approximate repeat occupies 434–787; that stretch reads YPDLSKHNNH…EKKLEKGEDI (354 aa). Residues 539 to 781 enclose the Phosphagen kinase C-terminal 2 domain; sequence YVLSCRVRTG…ELLVQMEKKL (243 aa). Residues 542-546, His605, Arg706, 734-739, and Asp749 contribute to the ATP site; these read SCRVR and RGTGGV. A Phosphagen kinase N-terminal 3 domain is found at 800–886; the sequence is PIKPFSYDYP…FDPVISARHG (87 aa). The stretch at 808–1161 is one 3; approximate repeat; that stretch reads YPDFSLHNNW…EKALMKGEDI (354 aa). Residues 913–1155 form the Phosphagen kinase C-terminal 3 domain; sequence FVLSCRVRTG…KLLVNLEKAL (243 aa).

This sequence belongs to the ATP:guanido phosphotransferase family. Monomer.

It is found in the cytoplasm. It localises to the cytoskeleton. Its subcellular location is the flagellum axoneme. It catalyses the reaction creatine + ATP = N-phosphocreatine + ADP + H(+). This axonemal protein participates in an energy shuttle that utilizes phosphocreatine to transfer the energy from ATP generated by the mitochondrion in the sperm head to dynein in the distal portions of the flagellum. This is Creatine kinase, flagellar from Strongylocentrotus purpuratus (Purple sea urchin).